The sequence spans 256 residues: MRHPVVMGNWKLNGSKEMVVDLLNGLNAELEGVTGVDVAVAPPALFVDLAERTLTEAGSAIILGAQNTDLNNSGAFTGDMSPAMLKEFGATHIIIGHSERREYHAESDEFVAKKFAFLKENGLTPVLCIGESDAQNEAGETMAVCARQLDAVINTQGVEALEGAIIAYEPIWAIGTGKAATAEDAQRIHAQIRAHIAEKSEAVAKNVVIQYGGSVKPENAAAYFAQPDIDGALVGGAALDAKSFAAIAKAAAEAKA.

Residue 9-11 (NWK) coordinates substrate. The Electrophile role is filled by His97. The Proton acceptor role is filled by Glu169. Substrate is bound by residues Gly175, Ser214, and 235–236 (GG).

The protein belongs to the triosephosphate isomerase family. Homodimer.

It is found in the cytoplasm. The catalysed reaction is D-glyceraldehyde 3-phosphate = dihydroxyacetone phosphate. The protein operates within carbohydrate biosynthesis; gluconeogenesis. Its pathway is carbohydrate degradation; glycolysis; D-glyceraldehyde 3-phosphate from glycerone phosphate: step 1/1. In terms of biological role, involved in the gluconeogenesis. Catalyzes stereospecifically the conversion of dihydroxyacetone phosphate (DHAP) to D-glyceraldehyde-3-phosphate (G3P). This is Triosephosphate isomerase from Moritella marina (Vibrio marinus).